The sequence spans 331 residues: 6-phosphogluconolactonase (331 aa).

Lys-287 is modified (N6-acetyllysine).

Belongs to the cycloisomerase 2 family.

The enzyme catalyses 6-phospho-D-glucono-1,5-lactone + H2O = 6-phospho-D-gluconate + H(+). Its pathway is carbohydrate degradation; pentose phosphate pathway; D-ribulose 5-phosphate from D-glucose 6-phosphate (oxidative stage): step 2/3. In terms of biological role, catalyzes the hydrolysis of 6-phosphogluconolactone to 6-phosphogluconate. The polypeptide is 6-phosphogluconolactonase (Escherichia coli O8 (strain IAI1)).